The chain runs to 443 residues: Chromosome partition protein MukF (443 aa).

The interval 209–237 (LDETSGNLRELQDVLNASGDKLQSQLLRI) is leucine-zipper.

It belongs to the MukF family. Interacts, and probably forms a ternary complex, with MukE and MukB via its C-terminal region. The complex formation is stimulated by calcium or magnesium. It is required for an interaction between MukE and MukB.

It is found in the cytoplasm. The protein resides in the nucleoid. Functionally, involved in chromosome condensation, segregation and cell cycle progression. May participate in facilitating chromosome segregation by condensation DNA from both sides of a centrally located replisome during cell division. Not required for mini-F plasmid partitioning. Probably acts via its interaction with MukB and MukE. Overexpression results in anucleate cells. It has a calcium binding activity. In Glaesserella parasuis serovar 5 (strain SH0165) (Haemophilus parasuis), this protein is Chromosome partition protein MukF.